We begin with the raw amino-acid sequence, 269 residues long: Protein MGF 110-1L (269 aa).

A topological domain (cytoplasmic) is located at residue methionine 1. An A repeat occupies 1 to 145 (MLGLQIFTLL…YVRKRSLQTV (145 aa)). A helical transmembrane segment spans residues 2 to 18 (LGLQIFTLLSIPTLLYT). Topologically, residues 19–116 (YELELLDLTR…HEWHEAVIRK (98 aa)) are extracellular. The N-linked (GlcNAc...) asparagine; by host glycan is linked to asparagine 75. Residues 117 to 137 (WQKLLTYGFYLVGCVLVANYV) form a helical membrane-spanning segment. The Cytoplasmic portion of the chain corresponds to 138 to 144 (RKRSLQT). Residues 145–165 (VMYLLVLLVIFFLLSQLMLYR) form a helical membrane-spanning segment. The stretch at 147 to 269 (YLLVLLVIFF…DNLMKKQDMM (123 aa)) is one B repeat. The Extracellular segment spans residues 166-269 (ELEDKKHKIG…DNLMKKQDMM (104 aa)).

It belongs to the asfivirus MGF 110 family.

It localises to the host membrane. Plays a role in virus cell tropism, and may be required for efficient virus replication in macrophages. The chain is Protein MGF 110-1L from African swine fever virus (isolate Tick/South Africa/Pretoriuskop Pr4/1996) (ASFV).